The following is an 823-amino-acid chain: Degenerin-like protein asic-1 (823 aa).

At 1–38 (MGKNSLKRALELDVVDFAEHTSAHGIPRAYVSTGWRRY) the chain is on the cytoplasmic side. Residues 39 to 59 (MWLLCFLFCLSCFGHQAYLIV) form a helical membrane-spanning segment. Residues 60–767 (ERFNRNDIIV…FGGQLGLWMG (708 aa)) lie on the Extracellular side of the membrane. Intrachain disulfides connect C86-C518 and C494-C501. N228, N326, N347, N415, and N486 each carry an N-linked (GlcNAc...) asparagine glycan. Residues N527 and N546 are each glycosylated (N-linked (GlcNAc...) asparagine). 4 disulfide bridges follow: C604-C687, C625-C683, C629-C681, and C638-C664. The GAS motif; ion selectivity filter signature appears at 767-769 (GVS). The helical transmembrane segment at 768–788 (VSVITIGEVACFFFEVFISLI) threads the bilayer. Over 789–795 (SSNRTKR) the chain is Cytoplasmic.

Belongs to the amiloride-sensitive sodium channel (TC 1.A.6) family. Homotrimer. Heterotrimer; with other ASIC proteins producing channel with different properties.

Its subcellular location is the cell membrane. It localises to the postsynaptic cell membrane. The protein localises to the cell projection. It is found in the dendrite. It carries out the reaction Na(+)(in) = Na(+)(out). The enzyme catalyses K(+)(in) = K(+)(out). The catalysed reaction is Li(+)(in) = Li(+)(out). It catalyses the reaction Ca(2+)(in) = Ca(2+)(out). Forms voltage-independent, pH-gated trimeric sodium channels that act as postsynaptic excitatory receptors in the nervous system, playing a crucial role in regulating synaptic plasticity, learning, and memory. Promotes synaptic vesicle fusion to positively regulate the release of dopamine at dopaminergic neuron synapses. Displays high selectivity for sodium ions but can also permit the permeation of other cations. The chain is Degenerin-like protein asic-1 from Caenorhabditis elegans.